The primary structure comprises 512 residues: Protein male-specific lethal-3 (512 aa).

Positions 11 to 90 constitute a Chromo domain; that stretch reads FHKGEIVLCY…QLQRELAEAA (80 aa). The disordered stretch occupies residues 98–175; the sequence is YSYKGTPDKP…DGRLKGNRGR (78 aa). Basic and acidic residues predominate over residues 149–169; that stretch reads RTRDNSGGKRKEKPPSGDGRL. An MRG domain is found at 196-500; that stretch reads QEDRIMMRVS…STALPQEDLQ (305 aa).

In terms of assembly, component of the male-specific lethal (MSL) histone acetyltransferase complex, composed of mof, mle, msl-1, msl-2 and msl-3 proteins, as well as roX1 and roX2 non-coding RNAs. Component of a maternal MSL subcomplex composed of mof, msl-1 and msl-3. In terms of processing, ubiquitinated by msl-2.

It localises to the nucleus. It is found in the chromosome. In terms of biological role, component of the male-specific lethal (MSL) histone acetyltransferase complex, a multiprotein complex essential for elevating transcription of the single X chromosome in the male (X chromosome dosage compensation). The MSL complex specifically associates with the single X chromosome in males and mediates formation of H4K16ac, promoting a two-fold activation of X chromosome. Acts as a histone reader that specifically recognizes and binds histone H3 trimethylated at 'Lys-36' (H3K36me3) and histone H4 monomethylated at 'Lys-20' (H4K20me1). Within the MSL complex, mediates the spreading of the MSL complex from initiation sites on the male X chromosome to flanking chromatin. Following initial recruitment of the MSL complex to male X chromosome by msl-2, msl-3 binds H3K36me3 and promotes spreading of the MSL complex in cis. In addition to its role in dosage compensation in males, promotes germline stem cell differentiation in females: recognizes and binds H3K36me3, promoting recruitment of the ATAC complex and transcription of genes, such as RpS19b. The sequence is that of Protein male-specific lethal-3 from Drosophila melanogaster (Fruit fly).